We begin with the raw amino-acid sequence, 102 residues long: uncharacterized protein (102 aa).

This is an uncharacterized protein from Sinorhizobium fredii (strain NBRC 101917 / NGR234).